Reading from the N-terminus, the 186-residue chain is ATP synthase subunit delta (186 aa).

It belongs to the ATPase delta chain family. In terms of assembly, F-type ATPases have 2 components, F(1) - the catalytic core - and F(0) - the membrane proton channel. F(1) has five subunits: alpha(3), beta(3), gamma(1), delta(1), epsilon(1). CF(0) has four main subunits: a(1), b(1), b'(1) and c(10-14). The alpha and beta chains form an alternating ring which encloses part of the gamma chain. F(1) is attached to F(0) by a central stalk formed by the gamma and epsilon chains, while a peripheral stalk is formed by the delta, b and b' chains.

It localises to the cell inner membrane. Its function is as follows. F(1)F(0) ATP synthase produces ATP from ADP in the presence of a proton or sodium gradient. F-type ATPases consist of two structural domains, F(1) containing the extramembraneous catalytic core and F(0) containing the membrane proton channel, linked together by a central stalk and a peripheral stalk. During catalysis, ATP synthesis in the catalytic domain of F(1) is coupled via a rotary mechanism of the central stalk subunits to proton translocation. In terms of biological role, this protein is part of the stalk that links CF(0) to CF(1). It either transmits conformational changes from CF(0) to CF(1) or is implicated in proton conduction. The chain is ATP synthase subunit delta from Cereibacter sphaeroides (strain ATCC 17029 / ATH 2.4.9) (Rhodobacter sphaeroides).